The primary structure comprises 428 residues: Gamma-glutamyl phosphate reductase (428 aa).

Belongs to the gamma-glutamyl phosphate reductase family.

Its subcellular location is the cytoplasm. It carries out the reaction L-glutamate 5-semialdehyde + phosphate + NADP(+) = L-glutamyl 5-phosphate + NADPH + H(+). The protein operates within amino-acid biosynthesis; L-proline biosynthesis; L-glutamate 5-semialdehyde from L-glutamate: step 2/2. In terms of biological role, catalyzes the NADPH-dependent reduction of L-glutamate 5-phosphate into L-glutamate 5-semialdehyde and phosphate. The product spontaneously undergoes cyclization to form 1-pyrroline-5-carboxylate. This is Gamma-glutamyl phosphate reductase from Zymomonas mobilis subsp. mobilis (strain ATCC 31821 / ZM4 / CP4).